A 420-amino-acid chain; its full sequence is L-rhamnose isomerase (420 aa).

Positions 264, 296, and 298 each coordinate Mn(2+).

Belongs to the rhamnose isomerase family. It depends on Mn(2+) as a cofactor.

It is found in the cytoplasm. The catalysed reaction is L-rhamnopyranose = L-rhamnulose. It participates in carbohydrate degradation; L-rhamnose degradation; glycerone phosphate from L-rhamnose: step 1/3. Functionally, catalyzes the interconversion of L-rhamnose and L-rhamnulose. The protein is L-rhamnose isomerase of Listeria monocytogenes serotype 4b (strain CLIP80459).